A 432-amino-acid polypeptide reads, in one-letter code: Serine hydroxymethyltransferase (432 aa).

Residues L131 and 135-137 (GHL) each bind (6S)-5,6,7,8-tetrahydrofolate. K240 is subject to N6-(pyridoxal phosphate)lysine.

This sequence belongs to the SHMT family. Homodimer. The cofactor is pyridoxal 5'-phosphate.

Its subcellular location is the cytoplasm. It carries out the reaction (6R)-5,10-methylene-5,6,7,8-tetrahydrofolate + glycine + H2O = (6S)-5,6,7,8-tetrahydrofolate + L-serine. The protein operates within one-carbon metabolism; tetrahydrofolate interconversion. Its pathway is amino-acid biosynthesis; glycine biosynthesis; glycine from L-serine: step 1/1. Catalyzes the reversible interconversion of serine and glycine with tetrahydrofolate (THF) serving as the one-carbon carrier. This reaction serves as the major source of one-carbon groups required for the biosynthesis of purines, thymidylate, methionine, and other important biomolecules. Also exhibits THF-independent aldolase activity toward beta-hydroxyamino acids, producing glycine and aldehydes, via a retro-aldol mechanism. The protein is Serine hydroxymethyltransferase of Acidiphilium cryptum (strain JF-5).